The sequence spans 930 residues: Isoleucine--tRNA ligase (930 aa).

Positions Pro57–His67 match the 'HIGH' region motif. L-isoleucyl-5'-AMP is bound at residue Glu554. Residues Lys595 to Ser599 carry the 'KMSKS' region motif. Lys598 is a binding site for ATP. Residues Cys888, Cys891, Cys908, and Cys911 each contribute to the Zn(2+) site.

It belongs to the class-I aminoacyl-tRNA synthetase family. IleS type 1 subfamily. In terms of assembly, monomer. Zn(2+) serves as cofactor.

The protein localises to the cytoplasm. It carries out the reaction tRNA(Ile) + L-isoleucine + ATP = L-isoleucyl-tRNA(Ile) + AMP + diphosphate. In terms of biological role, catalyzes the attachment of isoleucine to tRNA(Ile). As IleRS can inadvertently accommodate and process structurally similar amino acids such as valine, to avoid such errors it has two additional distinct tRNA(Ile)-dependent editing activities. One activity is designated as 'pretransfer' editing and involves the hydrolysis of activated Val-AMP. The other activity is designated 'posttransfer' editing and involves deacylation of mischarged Val-tRNA(Ile). This Streptococcus pneumoniae (strain JJA) protein is Isoleucine--tRNA ligase.